The primary structure comprises 178 residues: Large ribosomal subunit protein uL6 (178 aa).

The protein belongs to the universal ribosomal protein uL6 family. In terms of assembly, part of the 50S ribosomal subunit.

This protein binds to the 23S rRNA, and is important in its secondary structure. It is located near the subunit interface in the base of the L7/L12 stalk, and near the tRNA binding site of the peptidyltransferase center. This chain is Large ribosomal subunit protein uL6, found in Francisella tularensis subsp. novicida (strain U112).